A 429-amino-acid chain; its full sequence is Hemoglobinase (429 aa).

An N-terminal signal peptide occupies residues Met1–Cys19. The propeptide occupies Gln20–Thr31. His151 is a catalytic residue. Residues Phe288–Ser309 form a disordered region. Positions Arg292–Gly429 are excised as a propeptide.

It belongs to the peptidase C13 family.

The enzyme catalyses Hydrolysis of proteins and small molecule substrates at -Asn-|-Xaa- bonds.. Functionally, this protease is used by the parasite for degradation of the host globin. The chain is Hemoglobinase from Schistosoma mansoni (Blood fluke).